Consider the following 187-residue polypeptide: MAGESFILMGVSGSGKTLIGSKVAALLSAKFIDGDDLHPAKNIDKMSQGIPLSDEDRLPWLERLNDASYSLYKKNETGFIVCSSLKKQYRDILRKGSPHVHFLWLDGDYETILARMQRRAGHFMPVALLKSQFEALERPQADEQDIVRIDINHDIANVTEQCRQAVLAIRQNRICAKEGSASDQRCE.

Residue 10–17 (GVSGSGKT) participates in ATP binding.

It belongs to the gluconokinase GntK/GntV family.

The enzyme catalyses D-gluconate + ATP = 6-phospho-D-gluconate + ADP + H(+). It participates in carbohydrate acid metabolism; L-idonate degradation. The chain is Thermosensitive gluconokinase (idnK) from Escherichia coli (strain K12).